Reading from the N-terminus, the 164-residue chain is ATP synthase subunit b (164 aa).

The helical transmembrane segment at 6 to 26 (GELVGNFILVTGSVIVLLLLI) threads the bilayer.

It belongs to the ATPase B chain family. In terms of assembly, F-type ATPases have 2 components, F(1) - the catalytic core - and F(0) - the membrane proton channel. F(1) has five subunits: alpha(3), beta(3), gamma(1), delta(1), epsilon(1). F(0) has three main subunits: a(1), b(2) and c(10-14). The alpha and beta chains form an alternating ring which encloses part of the gamma chain. F(1) is attached to F(0) by a central stalk formed by the gamma and epsilon chains, while a peripheral stalk is formed by the delta and b chains.

Its subcellular location is the cell membrane. Functionally, f(1)F(0) ATP synthase produces ATP from ADP in the presence of a proton or sodium gradient. F-type ATPases consist of two structural domains, F(1) containing the extramembraneous catalytic core and F(0) containing the membrane proton channel, linked together by a central stalk and a peripheral stalk. During catalysis, ATP synthesis in the catalytic domain of F(1) is coupled via a rotary mechanism of the central stalk subunits to proton translocation. In terms of biological role, component of the F(0) channel, it forms part of the peripheral stalk, linking F(1) to F(0). The chain is ATP synthase subunit b from Streptococcus pyogenes serotype M3 (strain ATCC BAA-595 / MGAS315).